The chain runs to 158 residues: Transcriptional repressor NrdR (158 aa).

The interval 1–22 (MRCPYCGSEDTQVKDSRPAEDN) is disordered. Residues 3 to 34 (CPYCGSEDTQVKDSRPAEDNTSIRRRRICPDC) fold into a zinc finger. Residues 11 to 22 (TQVKDSRPAEDN) show a composition bias toward basic and acidic residues. The ATP-cone domain maps to 49–139 (LMVIKKTGRK…VYRDFSHAED (91 aa)).

The protein belongs to the NrdR family. Zn(2+) serves as cofactor.

Functionally, negatively regulates transcription of bacterial ribonucleotide reductase nrd genes and operons by binding to NrdR-boxes. In Rhizobium rhizogenes (strain K84 / ATCC BAA-868) (Agrobacterium radiobacter), this protein is Transcriptional repressor NrdR.